Consider the following 525-residue polypeptide: Polyamine aminopropyltransferase 1 (525 aa).

A run of 6 helical transmembrane segments spans residues 21–41 (ALLVLAVFVVASCGLAYELIA), 53–73 (ILQFSSIIGAYLFAMGIGSWV), 89–109 (LELLVGLFGGVSAAALFLLFA), 117–137 (LVLYALVTVIGVLVGMEIPLV), 155–175 (VLTFDYLGALAVSLLFPLVLA), and 180–200 (LVRTGFLFGLCNTAIAVWTLW). Residues 220 to 464 (AGMVGAALLA…GEWGFILAAP (245 aa)) form the PABS domain. The spermidine synthase stretch occupies residues 222 to 471 (MVGAALLAGF…AAPGRADFRP (250 aa)). Gln259 provides a ligand contact to S-methyl-5'-thioadenosine. Spermidine-binding residues include His289 and Asp313. S-methyl-5'-thioadenosine-binding positions include Asp333 and 367 to 368 (DA). Catalysis depends on Asp385, which acts as the Proton acceptor.

This sequence belongs to the spermidine/spermine synthase family. Homodimer or homotetramer.

The protein localises to the cell membrane. The catalysed reaction is S-adenosyl 3-(methylsulfanyl)propylamine + putrescine = S-methyl-5'-thioadenosine + spermidine + H(+). It functions in the pathway amine and polyamine biosynthesis; spermidine biosynthesis; spermidine from putrescine: step 1/1. In terms of biological role, catalyzes the irreversible transfer of a propylamine group from the amino donor S-adenosylmethioninamine (decarboxy-AdoMet) to putrescine (1,4-diaminobutane) to yield spermidine. The chain is Polyamine aminopropyltransferase 1 from Ralstonia nicotianae (strain ATCC BAA-1114 / GMI1000) (Ralstonia solanacearum).